A 355-amino-acid chain; its full sequence is WAT1-related protein At1g25270 (355 aa).

10 consecutive transmembrane segments (helical) span residues valine 4 to threonine 24, valine 33 to phenylalanine 53, leucine 65 to leucine 85, threonine 94 to phenylalanine 114, leucine 134 to tryptophan 154, valine 175 to leucine 195, leucine 207 to leucine 227, leucine 244 to tryptophan 264, leucine 272 to alanine 292, and leucine 297 to tryptophan 317. The region spanning phenylalanine 12–valine 142 is the EamA 1 domain. Residues asparagine 210 to valine 316 form the EamA 2 domain.

It belongs to the drug/metabolite transporter (DMT) superfamily. Plant drug/metabolite exporter (P-DME) (TC 2.A.7.4) family.

It is found in the membrane. This chain is WAT1-related protein At1g25270, found in Arabidopsis thaliana (Mouse-ear cress).